The sequence spans 237 residues: Ribosomal RNA large subunit methyltransferase E (237 aa).

Residues glycine 76, tryptophan 78, aspartate 99, aspartate 115, and aspartate 139 each contribute to the S-adenosyl-L-methionine site. Lysine 179 serves as the catalytic Proton acceptor.

Belongs to the class I-like SAM-binding methyltransferase superfamily. RNA methyltransferase RlmE family.

The protein localises to the cytoplasm. It catalyses the reaction uridine(2552) in 23S rRNA + S-adenosyl-L-methionine = 2'-O-methyluridine(2552) in 23S rRNA + S-adenosyl-L-homocysteine + H(+). Its function is as follows. Specifically methylates the uridine in position 2552 of 23S rRNA at the 2'-O position of the ribose in the fully assembled 50S ribosomal subunit. This chain is Ribosomal RNA large subunit methyltransferase E, found in Rhodopseudomonas palustris (strain ATCC BAA-98 / CGA009).